Here is a 2522-residue protein sequence, read N- to C-terminus: Unconventional myosin-IXAa (2522 aa).

Residues 15-113 (SELTLRIYPG…YRFLLREKNL (99 aa)) form the Ras-associating domain. In terms of domain architecture, Myosin motor spans 147 to 1007 (KDFDDLCNLP…ERQRLQDLLH (861 aa)). Residues 176–196 (IYTYVGSILIVINPFKFLPIY) traverse the membrane as a helical segment. 240–247 (GESGSGKT) provides a ligand contact to ATP. Residues 767–802 (VNRRNPRTPLSDLQGSNAINQREGWNGRPGRQNRLS) form a disordered region. Positions 777–786 (SDLQGSNAIN) are enriched in polar residues. Positions 888 to 910 (LNKLMETLGQSQPYFVKCIRSNS) are actin-binding. 4 IQ domains span residues 1012–1039 (SRIV…AACQ), 1063–1092 (QEGA…ASVL), 1102–1131 (QRRA…ATIR), and 1125–1154 (QRDA…QRLK). The segment at 1012-1149 (SRIVYLQRRF…LARQRFRELQ (138 aa)) is neck or regulatory domain. The tail stretch occupies residues 1150–2497 (KQRLKITHLP…LQGAKSSPQR (1348 aa)). Disordered regions lie at residues 1218-1254 (GMAP…RRMR), 1318-1409 (DKAP…STRR), 1424-1612 (NEAD…GNIF), 1630-1754 (NQEK…GRVR), 1799-1827 (RLSP…VKRR), and 1962-1983 (LDSS…KDTD). Over residues 1229 to 1242 (TIRERPRTLEDPNQ) the composition is skewed to basic and acidic residues. Polar residues-rich tracts occupy residues 1330-1349 (SPSS…STPD) and 1366-1390 (SLPT…NSVT). Basic and acidic residues-rich tracts occupy residues 1399 to 1408 (PSKDKKESTR) and 1426 to 1435 (ADVKPLEVKD). Residues 1437–1454 (AAQTSEPPSPAQPSTDSS) are compositionally biased toward polar residues. Residues 1456–1525 (VLEKLEKLNE…LRRIEQSRQE (70 aa)) adopt a coiled-coil conformation. Basic and acidic residues-rich tracts occupy residues 1458-1484 (EKLE…EMME), 1492-1523 (ILEE…EQSR), 1549-1566 (PARE…RPKD), and 1580-1589 (LESRGDEARS). Polar residues-rich tracts occupy residues 1594–1604 (KPSNQNVNISM) and 1631–1641 (QEKTPGAQNEV). Over residues 1656 to 1665 (PGHKKARMAR) the composition is skewed to basic residues. Residues 1681-1690 (GESEEEEYDE) are compositionally biased toward acidic residues. Basic and acidic residues-rich tracts occupy residues 1738–1753 (LGKH…DGRV) and 1810–1822 (LQRE…EPSP). The Phorbol-ester/DAG-type zinc-finger motif lies at 1990 to 2039 (GHIFKSTQYSIPTYCEYCSSLIWMMDKACVCKLCRYACHRKCCQKMTTKC). The region spanning 2054–2242 (VELSRLTNDE…LIICEQMNKY (189 aa)) is the Rho-GAP domain. Disordered stretches follow at residues 2274-2325 (PVHR…QEEK) and 2348-2522 (LEPR…EFMV). The stretch at 2317 to 2344 (QVAMQQEEKVLTEQIESLQKEKEELTFE) forms a coiled coil. Polar residues predominate over residues 2366-2383 (TADSSENLNVDSEGATSD). A compositionally biased stretch (low complexity) spans 2413–2429 (SLDSIDSCSTVSSVSSS). Positions 2436–2448 (RTHKLSLRSKSPS) are enriched in basic residues. Residues 2497–2506 (RHREQKKDPE) show a composition bias toward basic and acidic residues.

The protein belongs to the TRAFAC class myosin-kinesin ATPase superfamily. Myosin family.

Its subcellular location is the membrane. The protein resides in the cytoplasm. It localises to the synapse. The protein localises to the cell projection. It is found in the growth cone. In terms of biological role, myosins are actin-based motor molecules with ATPase activity. Unconventional myosins serve in intracellular movements. Regulates Rho by stimulating it's GTPase activity in neurons. Required for the regulation of neurite branching and motor neuron axon guidance. In Danio rerio (Zebrafish), this protein is Unconventional myosin-IXAa (myo9aa).